The following is a 158-amino-acid chain: NAD(P)H-quinone oxidoreductase subunit J, chloroplastic (158 aa).

The protein belongs to the complex I 30 kDa subunit family. As to quaternary structure, NDH is composed of at least 16 different subunits, 5 of which are encoded in the nucleus.

It is found in the plastid. The protein resides in the chloroplast thylakoid membrane. The catalysed reaction is a plastoquinone + NADH + (n+1) H(+)(in) = a plastoquinol + NAD(+) + n H(+)(out). It catalyses the reaction a plastoquinone + NADPH + (n+1) H(+)(in) = a plastoquinol + NADP(+) + n H(+)(out). In terms of biological role, NDH shuttles electrons from NAD(P)H:plastoquinone, via FMN and iron-sulfur (Fe-S) centers, to quinones in the photosynthetic chain and possibly in a chloroplast respiratory chain. The immediate electron acceptor for the enzyme in this species is believed to be plastoquinone. Couples the redox reaction to proton translocation, and thus conserves the redox energy in a proton gradient. The chain is NAD(P)H-quinone oxidoreductase subunit J, chloroplastic from Morus indica (Mulberry).